A 363-amino-acid polypeptide reads, in one-letter code: NADH-quinone oxidoreductase subunit H (363 aa).

10 helical membrane passes run 29–49 (VLKI…YVVW), 62–82 (GPMY…KLLF), 96–116 (FVIA…VVPF), 127–147 (VGLL…ILAG), 163–183 (AAQV…VMIA), 202–222 (FFDW…VSGV), 238–257 (EIVA…LFFL), 264–286 (ILVS…QGWV), 299–319 (KGGW…YIWF), and 339–359 (FIPL…YGVI).

The protein belongs to the complex I subunit 1 family. In terms of assembly, NDH-1 is composed of 14 different subunits. Subunits NuoA, H, J, K, L, M, N constitute the membrane sector of the complex.

It is found in the cell inner membrane. The enzyme catalyses a quinone + NADH + 5 H(+)(in) = a quinol + NAD(+) + 4 H(+)(out). In terms of biological role, NDH-1 shuttles electrons from NADH, via FMN and iron-sulfur (Fe-S) centers, to quinones in the respiratory chain. The immediate electron acceptor for the enzyme in this species is believed to be ubiquinone. Couples the redox reaction to proton translocation (for every two electrons transferred, four hydrogen ions are translocated across the cytoplasmic membrane), and thus conserves the redox energy in a proton gradient. This subunit may bind ubiquinone. This chain is NADH-quinone oxidoreductase subunit H, found in Xanthomonas euvesicatoria pv. vesicatoria (strain 85-10) (Xanthomonas campestris pv. vesicatoria).